The primary structure comprises 920 residues: 2-oxoglutarate dehydrogenase E1 component (920 aa).

This sequence belongs to the alpha-ketoglutarate dehydrogenase family. In terms of assembly, homodimer. Part of the 2-oxoglutarate dehydrogenase (OGDH) complex composed of E1 (2-oxoglutarate dehydrogenase), E2 (dihydrolipoamide succinyltransferase) and E3 (dihydrolipoamide dehydrogenase); the complex contains multiple copies of the three enzymatic components (E1, E2 and E3). Requires thiamine diphosphate as cofactor.

It carries out the reaction N(6)-[(R)-lipoyl]-L-lysyl-[protein] + 2-oxoglutarate + H(+) = N(6)-[(R)-S(8)-succinyldihydrolipoyl]-L-lysyl-[protein] + CO2. Its function is as follows. E1 component of the 2-oxoglutarate dehydrogenase (OGDH) complex which catalyzes the decarboxylation of 2-oxoglutarate, the first step in the conversion of 2-oxoglutarate to succinyl-CoA and CO(2). This is 2-oxoglutarate dehydrogenase E1 component from Leptospira interrogans serogroup Icterohaemorrhagiae serovar copenhageni (strain Fiocruz L1-130).